We begin with the raw amino-acid sequence, 220 residues long: Large ribosomal subunit protein uL10c (220 aa).

A chloroplast-targeting transit peptide spans 1–41; that stretch reads MEVALLSFSSSLSPLCHQRISTLTPKTSNSPNYPRLPVIRS.

The protein belongs to the universal ribosomal protein uL10 family. As to quaternary structure, part of the 50S ribosomal subunit.

It localises to the plastid. The protein localises to the chloroplast. In terms of biological role, this protein binds directly to 23S ribosomal RNA. This Arabidopsis thaliana (Mouse-ear cress) protein is Large ribosomal subunit protein uL10c (RPL10).